The primary structure comprises 275 residues: Transmembrane protein 45A (275 aa).

A run of 5 helical transmembrane segments spans residues 7 to 27 (HALP…KSIL), 51 to 71 (ILEG…EQFI), 100 to 120 (FFFG…SLPV), 150 to 170 (IFVH…AFLE), and 218 to 238 (ILFL…IVGM).

It belongs to the TMEM45 family.

Its subcellular location is the membrane. This chain is Transmembrane protein 45A (TMEM45A), found in Homo sapiens (Human).